The chain runs to 428 residues: GTPase Obg (428 aa).

The Obg domain maps to 1-158; sequence MFVDQVKIYV…RDVILELKVL (158 aa). The 171-residue stretch at 159-329 folds into the OBG-type G domain; the sequence is ADVGLVGFPS…LLFEVANLIE (171 aa). GTP-binding positions include 165-172, 190-194, 212-215, 282-285, and 310-312; these read GFPSVGKS, FTTIV, DLPG, NKMD, and SAV. Mg(2+)-binding residues include Ser172 and Thr192. The 79-residue stretch at 350-428 folds into the OCT domain; the sequence is KFDTEGVKFE…ILEYEFEFID (79 aa).

It belongs to the TRAFAC class OBG-HflX-like GTPase superfamily. OBG GTPase family. Monomer. The cofactor is Mg(2+).

The protein localises to the cytoplasm. An essential GTPase which binds GTP, GDP and possibly (p)ppGpp with moderate affinity, with high nucleotide exchange rates and a fairly low GTP hydrolysis rate. Plays a role in control of the cell cycle, stress response, ribosome biogenesis and in those bacteria that undergo differentiation, in morphogenesis control. In Bacillus cereus (strain ATCC 14579 / DSM 31 / CCUG 7414 / JCM 2152 / NBRC 15305 / NCIMB 9373 / NCTC 2599 / NRRL B-3711), this protein is GTPase Obg.